We begin with the raw amino-acid sequence, 445 residues long: Meiosis-specific serine/threonine-protein kinase mek1 (445 aa).

Residues 62–116 (VSVGRSNTCNYQLLQFTASYKHFRVYSVLIDDDMDPLVYCEDQSSNGTFLNHRLI) enclose the FHA domain. Residues 160–421 (NITQRLLGIG…VKQCLSHPWF (262 aa)) enclose the Protein kinase domain. ATP-binding positions include 166–174 (LGIGGFSRI) and Lys-189. The active-site Proton acceptor is Asp-281.

It belongs to the protein kinase superfamily. CAMK Ser/Thr protein kinase family. CHEK2 subfamily.

The catalysed reaction is L-seryl-[protein] + ATP = O-phospho-L-seryl-[protein] + ADP + H(+). It catalyses the reaction L-threonyl-[protein] + ATP = O-phospho-L-threonyl-[protein] + ADP + H(+). In terms of biological role, probable protein kinase required for meiotic recombination. This chain is Meiosis-specific serine/threonine-protein kinase mek1 (mek1), found in Schizosaccharomyces pombe (strain 972 / ATCC 24843) (Fission yeast).